The sequence spans 699 residues: Elongation factor G (699 aa).

One can recognise a tr-type G domain in the interval 8–288 (EDYRNFGIMA…AVVDYLPSPV (281 aa)). GTP is bound by residues 17 to 24 (AHIDAGKT), 86 to 90 (DTPGH), and 140 to 143 (NKMD).

This sequence belongs to the TRAFAC class translation factor GTPase superfamily. Classic translation factor GTPase family. EF-G/EF-2 subfamily.

It is found in the cytoplasm. Functionally, catalyzes the GTP-dependent ribosomal translocation step during translation elongation. During this step, the ribosome changes from the pre-translocational (PRE) to the post-translocational (POST) state as the newly formed A-site-bound peptidyl-tRNA and P-site-bound deacylated tRNA move to the P and E sites, respectively. Catalyzes the coordinated movement of the two tRNA molecules, the mRNA and conformational changes in the ribosome. The protein is Elongation factor G of Sinorhizobium medicae (strain WSM419) (Ensifer medicae).